Consider the following 317-residue polypeptide: 4-diphosphocytidyl-2-C-methyl-D-erythritol kinase (317 aa).

K11 is an active-site residue. An ATP-binding site is contributed by 99–109; the sequence is PVAAGLAGGST. D141 is a catalytic residue.

The protein belongs to the GHMP kinase family. IspE subfamily.

The catalysed reaction is 4-CDP-2-C-methyl-D-erythritol + ATP = 4-CDP-2-C-methyl-D-erythritol 2-phosphate + ADP + H(+). Its pathway is isoprenoid biosynthesis; isopentenyl diphosphate biosynthesis via DXP pathway; isopentenyl diphosphate from 1-deoxy-D-xylulose 5-phosphate: step 3/6. In terms of biological role, catalyzes the phosphorylation of the position 2 hydroxy group of 4-diphosphocytidyl-2C-methyl-D-erythritol. In Nostoc punctiforme (strain ATCC 29133 / PCC 73102), this protein is 4-diphosphocytidyl-2-C-methyl-D-erythritol kinase.